A 274-amino-acid chain; its full sequence is Nitrogenase iron protein (274 aa).

An ATP-binding site is contributed by 8 to 15 (GKGGIGKS). Cys-94 is a [4Fe-4S] cluster binding site. Arg-97 is subject to ADP-ribosylarginine; by dinitrogenase reductase ADP-ribosyltransferase. Residue Cys-131 coordinates [4Fe-4S] cluster.

It belongs to the NifH/BchL/ChlL family. As to quaternary structure, homodimer. [4Fe-4S] cluster serves as cofactor. The reversible ADP-ribosylation of Arg-97 inactivates the nitrogenase reductase and regulates nitrogenase activity.

It carries out the reaction N2 + 8 reduced [2Fe-2S]-[ferredoxin] + 16 ATP + 16 H2O = H2 + 8 oxidized [2Fe-2S]-[ferredoxin] + 2 NH4(+) + 16 ADP + 16 phosphate + 6 H(+). The key enzymatic reactions in nitrogen fixation are catalyzed by the nitrogenase complex, which has 2 components: the iron protein and the molybdenum-iron protein. This Pelodictyon phaeoclathratiforme (strain DSM 5477 / BU-1) protein is Nitrogenase iron protein.